A 139-amino-acid polypeptide reads, in one-letter code: Small ribosomal subunit protein uS12 (139 aa).

The tract at residues 1–21 is disordered; the sequence is MSTVSQLIKKRRSSKTSKTKA. Positions 8-18 are enriched in basic residues; that stretch reads IKKRRSSKTSK.

This sequence belongs to the universal ribosomal protein uS12 family. Part of the 30S ribosomal subunit. Contacts proteins S8 and S17. May interact with IF1 in the 30S initiation complex.

With S4 and S5 plays an important role in translational accuracy. In terms of biological role, interacts with and stabilizes bases of the 16S rRNA that are involved in tRNA selection in the A site and with the mRNA backbone. Located at the interface of the 30S and 50S subunits, it traverses the body of the 30S subunit contacting proteins on the other side and probably holding the rRNA structure together. The combined cluster of proteins S8, S12 and S17 appears to hold together the shoulder and platform of the 30S subunit. The sequence is that of Small ribosomal subunit protein uS12 from Onion yellows phytoplasma (strain OY-M).